The chain runs to 244 residues: 7-cyano-7-deazaguanine synthase (244 aa).

14–24 (FSGGQDSATCV) is an ATP binding site. 4 residues coordinate Zn(2+): C202, C217, C220, and C223.

It belongs to the QueC family. Zn(2+) serves as cofactor.

It catalyses the reaction 7-carboxy-7-deazaguanine + NH4(+) + ATP = 7-cyano-7-deazaguanine + ADP + phosphate + H2O + H(+). Its pathway is purine metabolism; 7-cyano-7-deazaguanine biosynthesis. Catalyzes the ATP-dependent conversion of 7-carboxy-7-deazaguanine (CDG) to 7-cyano-7-deazaguanine (preQ(0)). The chain is 7-cyano-7-deazaguanine synthase from Burkholderia ambifaria (strain MC40-6).